The sequence spans 393 residues: RNA pseudouridine synthase 7 (393 aa).

An S4 RNA-binding domain is found at 49 to 118; sequence KTIVDLFTDE…GDITILQNEA (70 aa). Residue Asp-162 is part of the active site.

It belongs to the pseudouridine synthase RluA family.

The enzyme catalyses a uridine in RNA = a pseudouridine in RNA. The sequence is that of RNA pseudouridine synthase 7 from Oryza sativa subsp. japonica (Rice).